A 249-amino-acid chain; its full sequence is MRKKIIAGNWKMNLTLAEAKEITKGLLSACDSSSYEIMVFPSALHLESVASIARDSQLIVGAQNAYQSGLTAMTGEISPVQLAELGIQTVLVGHSERRQFLGETSEFDNTKISYFLKHGLRVVYCVGETWAEREKGNTFSVLEDQIGKGLKGITSDLFKNLVIAYEPVWAIGTGKVATPVEAEEAHAFIRKEIGKLFVGADLVAENIQILYGGSVKPDNIKELLAKPNIDGGLVGGASQKLDLFLGLLK.

9–11 (NWK) is a binding site for substrate. His-94 acts as the Electrophile in catalysis. The Proton acceptor role is filled by Glu-166. Substrate contacts are provided by residues Gly-172, Ser-214, and 235–236 (GG).

Belongs to the triosephosphate isomerase family. Homodimer.

The protein localises to the cytoplasm. It catalyses the reaction D-glyceraldehyde 3-phosphate = dihydroxyacetone phosphate. It participates in carbohydrate biosynthesis; gluconeogenesis. It functions in the pathway carbohydrate degradation; glycolysis; D-glyceraldehyde 3-phosphate from glycerone phosphate: step 1/1. In terms of biological role, involved in the gluconeogenesis. Catalyzes stereospecifically the conversion of dihydroxyacetone phosphate (DHAP) to D-glyceraldehyde-3-phosphate (G3P). In Leptospira biflexa serovar Patoc (strain Patoc 1 / Ames), this protein is Triosephosphate isomerase.